Consider the following 135-residue polypeptide: MAGHQKEKAIADEVHQNQILRELYLKELRTQKLYTQYHVNPLRKVHTIARKPMSWHDNLEEPADARFLNLIHHAAQGPRKKYPETQTEGQEIGWDSEPLVNPQRDDRRLNHFRVYKDITLYKAKMWSLGEDDRHK.

The segment at 75 to 100 is disordered; that stretch reads AQGPRKKYPETQTEGQEIGWDSEPLV.

The protein belongs to the CFAP144 family. In terms of assembly, microtubule inner protein component of sperm flagellar doublet microtubules.

It localises to the cytoplasm. The protein resides in the cytoskeleton. It is found in the cilium axoneme. The protein localises to the flagellum axoneme. In terms of biological role, microtubule inner protein (MIP) part of the dynein-decorated doublet microtubules (DMTs) in cilia axoneme, which is required for motile cilia beating. This chain is Cilia- and flagella-associated protein 144 (CFAP144), found in Bos taurus (Bovine).